Consider the following 152-residue polypeptide: Large ribosomal subunit protein bL9 (152 aa).

This sequence belongs to the bacterial ribosomal protein bL9 family.

Binds to the 23S rRNA. This is Large ribosomal subunit protein bL9 from Mycobacterium bovis (strain ATCC BAA-935 / AF2122/97).